A 142-amino-acid polypeptide reads, in one-letter code: Succinate dehydrogenase subunit 6, mitochondrial (142 aa).

G2 is modified (N-acetylglycine).

In terms of assembly, component of complex II composed of eight subunits in plants: four classical SDH subunits SDH1, SDH2, SDH3 and SDH4 (a flavoprotein (FP), an iron-sulfur protein (IP), and a cytochrome b composed of a large and a small subunit.), as well as four subunits unknown in mitochondria from bacteria and heterotrophic eukaryotes.

It localises to the mitochondrion inner membrane. It participates in carbohydrate metabolism; tricarboxylic acid cycle. The sequence is that of Succinate dehydrogenase subunit 6, mitochondrial from Arabidopsis thaliana (Mouse-ear cress).